The sequence spans 91 residues: UPF0250 protein PP_4802 (91 aa).

It belongs to the UPF0250 family.

This chain is UPF0250 protein PP_4802, found in Pseudomonas putida (strain ATCC 47054 / DSM 6125 / CFBP 8728 / NCIMB 11950 / KT2440).